Consider the following 250-residue polypeptide: Hydroxyacylglutathione hydrolase (250 aa).

Residues H53, H55, D57, H58, H110, D127, and H165 each coordinate Zn(2+).

Belongs to the metallo-beta-lactamase superfamily. Glyoxalase II family. In terms of assembly, monomer. Zn(2+) serves as cofactor.

The enzyme catalyses an S-(2-hydroxyacyl)glutathione + H2O = a 2-hydroxy carboxylate + glutathione + H(+). Its pathway is secondary metabolite metabolism; methylglyoxal degradation; (R)-lactate from methylglyoxal: step 2/2. Functionally, thiolesterase that catalyzes the hydrolysis of S-D-lactoyl-glutathione to form glutathione and D-lactic acid. The chain is Hydroxyacylglutathione hydrolase from Photorhabdus laumondii subsp. laumondii (strain DSM 15139 / CIP 105565 / TT01) (Photorhabdus luminescens subsp. laumondii).